We begin with the raw amino-acid sequence, 326 residues long: Nitrogen metabolite regulation-like protein bik4 (326 aa).

Residues 13–18 (GATGEV) and 161–164 (FASN) contribute to the NADP(+) site.

The protein belongs to the NmrA-type oxidoreductase family.

Functionally, nitrogen metabolite regulation-like protein involved in the regulation of the gene cluster that mediates the biosynthesis of bikaverin, a red pigment also considered as a mycotoxin. This is Nitrogen metabolite regulation-like protein bik4 from Gibberella fujikuroi (strain CBS 195.34 / IMI 58289 / NRRL A-6831) (Bakanae and foot rot disease fungus).